Here is a 117-residue protein sequence, read N- to C-terminus: Photosystem II reaction center Psb28 protein (117 aa).

Belongs to the Psb28 family. In terms of assembly, part of the photosystem II complex.

It localises to the cellular thylakoid membrane. The protein is Photosystem II reaction center Psb28 protein of Prochlorococcus marinus (strain MIT 9301).